Here is a 716-residue protein sequence, read N- to C-terminus: uncharacterized protein (716 aa).

2 disordered regions span residues Ser-84–Pro-103 and Val-153–Gln-189. Position 97 is a phosphoserine (Ser-97). Residues Lys-201, Lys-204, Lys-237, Lys-283, and Lys-626 each participate in a glycyl lysine isopeptide (Lys-Gly) (interchain with G-Cter in SUMO2) cross-link.

This is an uncharacterized protein from Mus musculus (Mouse).